The primary structure comprises 20 residues: Small ribosomal subunit protein bS20 (20 aa).

It belongs to the bacterial ribosomal protein bS20 family.

Functionally, binds directly to 16S ribosomal RNA. This Brevundimonas diminuta (Pseudomonas diminuta) protein is Small ribosomal subunit protein bS20 (rpsT).